A 97-amino-acid polypeptide reads, in one-letter code: Large ribosomal subunit protein bL28 (97 aa).

The protein belongs to the bacterial ribosomal protein bL28 family.

This is Large ribosomal subunit protein bL28 from Rickettsia prowazekii (strain Madrid E).